Consider the following 51-residue polypeptide: Large ribosomal subunit protein bL33 (51 aa).

A disordered region spans residues 1–21 (MRDKIKLESGAGTGHFYTTTK).

Belongs to the bacterial ribosomal protein bL33 family.

This Neisseria gonorrhoeae (strain ATCC 700825 / FA 1090) protein is Large ribosomal subunit protein bL33.